Consider the following 122-residue polypeptide: Basic phospholipase A2 vipoxin B chain (122 aa).

7 disulfides stabilise this stretch: Cys26–Cys115, Cys28–Cys44, Cys43–Cys95, Cys49–Cys122, Cys50–Cys88, Cys57–Cys81, and Cys75–Cys86. Ca(2+)-binding residues include Tyr27, Gly29, and Gly31. The active site involves His47. Asp48 lines the Ca(2+) pocket. Residue Asp89 is part of the active site.

It belongs to the phospholipase A2 family. Group II subfamily. D49 sub-subfamily. In terms of assembly, heterodimer of A (AC P04084) and B chains; non-covalently linked. The A chain (acidic) is non-toxic, and increases the toxicity of the B chain (basic). The A chain may act as factor stabilizing the complex structure and hence retaining its toxicity by preventing non-specific binding. Upon binding to the target membranes the A chain is postulated to dissociate. Ca(2+) serves as cofactor. As to expression, expressed by the venom gland.

It localises to the secreted. The catalysed reaction is a 1,2-diacyl-sn-glycero-3-phosphocholine + H2O = a 1-acyl-sn-glycero-3-phosphocholine + a fatty acid + H(+). In terms of biological role, heterodimer: postsynaptic neurotoxin. Monomer: snake venom phospholipase A2 (PLA2) that shows hemolytic activity and inhibition of platelet aggregation. The hemolytic activity occurs only in presence of fatty acids (unsaturated fatty acids facilitate induce a strong hemolytic activity, whereas saturated fatty acids induce a slight activity). The inhibition of platelet aggregation is almost maximal when aggregation is induced by collagen, and arachidonic acid, whereas it is only of 30% when the aggregation is induced by ADP. PLA2 catalyzes the calcium-dependent hydrolysis of the 2-acyl groups in 3-sn-phosphoglycerides. The protein is Basic phospholipase A2 vipoxin B chain of Vipera ammodytes meridionalis (Eastern sand viper).